A 232-amino-acid polypeptide reads, in one-letter code: 5'-methylthioadenosine/S-adenosylhomocysteine nucleosidase (232 aa).

Catalysis depends on Glu12, which acts as the Proton acceptor. Substrate contacts are provided by residues Gly78, Ile152, and Met173–Glu174. Catalysis depends on Asp197, which acts as the Proton donor.

The protein belongs to the PNP/UDP phosphorylase family. MtnN subfamily. In terms of assembly, homodimer.

It catalyses the reaction S-adenosyl-L-homocysteine + H2O = S-(5-deoxy-D-ribos-5-yl)-L-homocysteine + adenine. The enzyme catalyses S-methyl-5'-thioadenosine + H2O = 5-(methylsulfanyl)-D-ribose + adenine. The catalysed reaction is 5'-deoxyadenosine + H2O = 5-deoxy-D-ribose + adenine. It participates in amino-acid biosynthesis; L-methionine biosynthesis via salvage pathway; S-methyl-5-thio-alpha-D-ribose 1-phosphate from S-methyl-5'-thioadenosine (hydrolase route): step 1/2. Catalyzes the irreversible cleavage of the glycosidic bond in both 5'-methylthioadenosine (MTA) and S-adenosylhomocysteine (SAH/AdoHcy) to adenine and the corresponding thioribose, 5'-methylthioribose and S-ribosylhomocysteine, respectively. Also cleaves 5'-deoxyadenosine, a toxic by-product of radical S-adenosylmethionine (SAM) enzymes, into 5-deoxyribose and adenine. Thus, is required for in vivo function of the radical SAM enzymes biotin synthase and lipoic acid synthase, that are inhibited by 5'-deoxyadenosine accumulation. This Salmonella paratyphi B (strain ATCC BAA-1250 / SPB7) protein is 5'-methylthioadenosine/S-adenosylhomocysteine nucleosidase.